The chain runs to 504 residues: MYKQILTFLILFLRYILSEFPDDPYEDDDTSDDNNSDYEGQKCNPYRDKACLVNDEALGKKIFESFAEGTKYFTITSSTRGVRFGSEGLALTIQDEFDNPALVSSFYIMYGKVEAEIKGAAGKGIISSFYLQSDDLDEIDVVEIFGSDPYEFQTNFFIKGNTTTYDRGRYHEMHPSPLSEFHKYGIEWSPDLITWYLDDKPVRMLGRRNKHGLPCSPMFLKFSLWSVEDDDEGTIAWAGGAASFSEGPFTMHIKNLKVQDYSKALTYSYGNLRDGNWLDLRADGGYLYEGHKYCLPPKMLDKLKPTPKQETDDDQVLTSSKSQRVATTISEDKNTVSYYPPSATNSHTTWDRLSEWETEQDETGTDDTENSDNEEEESITAIPISKSRKGSTRRLDISTQLPPLSQNESKIAEIKNITTTKHIHNTTTSLQISKIKSKKVGVTTTIYSSSTPQSTSKSRMPYNIFFNYPGKENSRFKSGVSSILATSFSSVVIAEILVIVVLLL.

The N-terminal stretch at 1–18 is a signal peptide; it reads MYKQILTFLILFLRYILS. Residues 19–270 form the GH16 domain; sequence EFPDDPYEDD…YSKALTYSYG (252 aa). Asparagine 34 carries N-linked (GlcNAc...) asparagine glycosylation. An intrachain disulfide couples cysteine 43 to cysteine 51. Residue glutamate 138 is the Nucleophile of the active site. Residue glutamate 143 is the Proton donor of the active site. Glutamate 143 provides a ligand contact to chitin. Asparagine 161 carries N-linked (GlcNAc...) asparagine glycosylation. Residues lysine 221, tryptophan 225, and threonine 234 each coordinate chitin. Positions 304 to 404 are disordered; it reads KPTPKQETDD…LDISTQLPPL (101 aa). The segment covering 316 to 329 has biased composition (polar residues); the sequence is VLTSSKSQRVATTI. A compositionally biased stretch (acidic residues) spans 356-378; that stretch reads WETEQDETGTDDTENSDNEEEES. Residues asparagine 407, asparagine 416, and asparagine 425 are each glycosylated (N-linked (GlcNAc...) asparagine). Residue glycine 479 is the site of GPI-anchor amidated glycine attachment. The propeptide at 480–504 is removed in mature form; the sequence is VSSILATSFSSVVIAEILVIVVLLL.

Belongs to the glycosyl hydrolase 16 family. CRH1 subfamily. In terms of processing, the GPI-anchor is attached to the protein in the endoplasmic reticulum and serves to target the protein to the cell surface. There, the glucosamine-inositol phospholipid moiety is cleaved off and the GPI-modified mannoprotein is covalently attached via its lipidless GPI glycan remnant to the 1,6-beta-glucan of the outer cell wall layer.

Its subcellular location is the secreted. The protein localises to the cell wall. It localises to the membrane. The catalysed reaction is Random endo-hydrolysis of N-acetyl-beta-D-glucosaminide (1-&gt;4)-beta-linkages in chitin and chitodextrins.. Dual chitinase/transglycosylase that plays a role in cell wall architecture. Chitinase and transglycosylase activities are coupled. Required for the polysaccharide cross-linking at the septa and the cell wall. More specifically, transfers chitin to 1,6-beta-glucan in the cell wall. Plays an important role in fungal pathogenesis via its functions in cell wall assembly and regeneration, filamentation, and adherence to host cells. The protein is Crh-like protein CRH12 (CRH12) of Candida albicans (strain SC5314 / ATCC MYA-2876) (Yeast).